Reading from the N-terminus, the 266-residue chain is DNA-directed RNA polymerase subunit Rpo3 (266 aa).

Residues Cys205, Cys208, and Cys211 each coordinate [3Fe-4S] cluster.

It belongs to the archaeal Rpo3/eukaryotic RPB3 RNA polymerase subunit family. In terms of assembly, part of the RNA polymerase complex. [3Fe-4S] cluster is required as a cofactor.

It localises to the cytoplasm. The catalysed reaction is RNA(n) + a ribonucleoside 5'-triphosphate = RNA(n+1) + diphosphate. In terms of biological role, DNA-dependent RNA polymerase (RNAP) catalyzes the transcription of DNA into RNA using the four ribonucleoside triphosphates as substrates. This chain is DNA-directed RNA polymerase subunit Rpo3, found in Methanosarcina mazei (strain ATCC BAA-159 / DSM 3647 / Goe1 / Go1 / JCM 11833 / OCM 88) (Methanosarcina frisia).